A 614-amino-acid polypeptide reads, in one-letter code: Vitamin B12 transporter BtuB (614 aa).

An N-terminal signal peptide occupies residues 1 to 20; the sequence is MIKKASLLTACSVTAFSAWA. The TonB box motif lies at 26 to 33; sequence DTLVVTAN. Positions 38 to 152 constitute a TBDR plug domain; it reads PRSTVLAPTT…IGGVVNIITT (115 aa). Cyanocob(III)alamin-binding positions include L83, S85, N92, and 110–111; that span reads VS. Positions 155–614 constitute a TBDR beta-barrel domain; sequence HPGTEISAGW…EYTLSGSYTF (460 aa). 3 beta stranded membrane-spanning segments follow: residues 158–165, 169–178, and 184–195; these read TEISAGWG, YQNYDVSTQQ, and TRVTLLGDYAHT. Positions 199, 211, 213, and 215 each coordinate Ca(2+). 2 consecutive transmembrane segments (beta stranded) span residues 217–227 and 232–248; these read FLSKTLYGALE and DVWS…NRTN. Ca(2+) is bound by residues Y249 and D250. Residue A251 coordinates cyanocob(III)alamin. D261 serves as a coordination point for Ca(2+). The next 14 beta stranded transmembrane spans lie at 263–277, 279–296, 309–325, 328–337, 353–369, 371–381, 385–400, 403–417, 434–443, 449–458, 473–490, 494–509, 517–529, and 535–550; these read RKLY…LRYN, ELIK…KDYN, TLDE…NNII, HGNIGAGVDW, YDQR…QQVG, FTFEGAGRSDD, FGRH…WEFI, YRFI…KAPN, KSKQWEGAFE, VNWRISGYRN, YYNE…TANF, PLTH…ARNA, RRAK…QLDW, and DWGI…YDKD. T309 provides a ligand contact to cyanocob(III)alamin. R517 provides a ligand contact to cyanocob(III)alamin. Y551 provides a ligand contact to cyanocob(III)alamin. Transmembrane regions (beta stranded) follow at residues 558 to 572, 585 to 596, and 602 to 614; these read TVKM…LAVA, IANLFDKDYETV, and AGRE…SYTF. Residues 597 to 614 carry the TonB C-terminal box motif; it reads YGYQTAGREYTLSGSYTF.

It belongs to the TonB-dependent receptor family. BtuB (TC 1.B.14.3.1) subfamily.

Its subcellular location is the cell outer membrane. Involved in the active translocation of vitamin B12 (cyanocobalamin) across the outer membrane to the periplasmic space. It derives its energy for transport by interacting with the trans-periplasmic membrane protein TonB. The sequence is that of Vitamin B12 transporter BtuB from Escherichia coli O1:K1 / APEC.